A 110-amino-acid polypeptide reads, in one-letter code: Phosphoribosyl-ATP pyrophosphatase (110 aa).

The protein belongs to the PRA-PH family.

The protein localises to the cytoplasm. The catalysed reaction is 1-(5-phospho-beta-D-ribosyl)-ATP + H2O = 1-(5-phospho-beta-D-ribosyl)-5'-AMP + diphosphate + H(+). It participates in amino-acid biosynthesis; L-histidine biosynthesis; L-histidine from 5-phospho-alpha-D-ribose 1-diphosphate: step 2/9. The sequence is that of Phosphoribosyl-ATP pyrophosphatase (hisE) from Azotobacter chroococcum mcd 1.